The primary structure comprises 71 residues: Small ribosomal subunit protein bS18 (71 aa).

The protein belongs to the bacterial ribosomal protein bS18 family. As to quaternary structure, part of the 30S ribosomal subunit. Forms a tight heterodimer with protein bS6.

Functionally, binds as a heterodimer with protein bS6 to the central domain of the 16S rRNA, where it helps stabilize the platform of the 30S subunit. This chain is Small ribosomal subunit protein bS18, found in Dichelobacter nodosus (strain VCS1703A).